A 406-amino-acid polypeptide reads, in one-letter code: Sorting nexin-6 (406 aa).

Met1 carries the post-translational modification N-acetylmethionine. Met2 bears the N-acetylmethionine; in Sorting nexin-6, N-terminally processed mark. The segment at Met2–Asn179 is interaction with PIM1. A PX domain is found at Leu26 to Leu173. A 1,2-diacyl-sn-glycero-3-phospho-(1D-myo-inositol-4,5-bisphosphate)-binding positions include Ser41–Lys47, Phe100–Lys106, and Glu114–Met117. Residues Ser116 and Ser194 each carry the phosphoserine modification. The tract at residues Glu182–Ile199 is membrane-binding amphipathic helix. The BAR domain maps to Val203–Thr406.

It belongs to the sorting nexin family. Forms heterodimers with BAR domain-containing sorting nexins SNX1 and SNX2. The heterodimers are proposed to self-assemble into helical arrays on the membrane to stabilize and expand local membrane curvature underlying endosomal tubule formation. Thought to be a component of the originally described retromer complex (also called SNX-BAR retromer) which is a pentamer containing the heterotrimeric retromer cargo-selective complex (CSC), also described as vacuolar protein sorting subcomplex (VPS), and a heterodimeric membrane-deforming subcomplex formed between SNX1 or SNX2 and SNX5 or SNX6 (also called SNX-BAR subcomplex); the respective CSC and SNX-BAR subcomplexes associate with low affinity. Interacts with SNX1, SNX2, VPS26A, VPS29, VPS35, TGFB receptors, BACE1, BRMS1, PIP5K1C. Interacts with DCTN1; the association with DCTN1 is involved in movement of retromer-c ontaining vesicles toward the TGN. Interacts with PIM1; translocating SNX6 to the nucleus. Interacts with CDKN1B and GIT1. In terms of processing, in vitro phosphorylated by PIM1; not affecting PIM1-dependent nuclear translocation.

It is found in the early endosome membrane. The protein localises to the cytoplasmic vesicle. The protein resides in the cytoplasm. Its subcellular location is the nucleus. In terms of biological role, involved in several stages of intracellular trafficking. Interacts with membranes phosphatidylinositol 3,4-bisphosphate and/or phosphatidylinositol 4,5-bisphosphate. Acts in part as component of the retromer membrane-deforming SNX-BAR subcomplex. The SNX-BAR retromer mediates retrograde transport of cargo proteins from endosomes to the trans-Golgi network (TGN) and is involved in endosome-to-plasma membrane transport for cargo protein recycling. The SNX-BAR subcomplex functions to deform the donor membrane into a tubular profile called endosome-to-TGN transport carrier (ETC). Does not have in vitro vesicle-to-membrane remodeling activity. Involved in retrograde endosome-to-TGN transport of lysosomal enzyme receptor IGF2R. May function as link between transport vesicles and dynactin. Negatively regulates retrograde transport of BACE1 from the cell surface to the trans-Golgi network. Involved in E-cadherin sorting and degradation; inhibits PIP5K1C-mediated E-cadherin degradation. In association with GIT1 involved in EGFR degradation. Promotes lysosomal degradation of CDKN1B. May contribute to transcription regulation. This Mus musculus (Mouse) protein is Sorting nexin-6 (Snx6).